We begin with the raw amino-acid sequence, 613 residues long: Dihydroxy-acid dehydratase (613 aa).

Mg(2+) is bound at residue Asp-81. Cys-122 is a binding site for [2Fe-2S] cluster. Asp-123 and Lys-124 together coordinate Mg(2+). Lys-124 carries the N6-carboxylysine modification. Cys-195 is a binding site for [2Fe-2S] cluster. Mg(2+) is bound at residue Glu-491. The Proton acceptor role is filled by Ser-517.

This sequence belongs to the IlvD/Edd family. In terms of assembly, homodimer. [2Fe-2S] cluster is required as a cofactor. Mg(2+) serves as cofactor.

It carries out the reaction (2R)-2,3-dihydroxy-3-methylbutanoate = 3-methyl-2-oxobutanoate + H2O. It catalyses the reaction (2R,3R)-2,3-dihydroxy-3-methylpentanoate = (S)-3-methyl-2-oxopentanoate + H2O. The protein operates within amino-acid biosynthesis; L-isoleucine biosynthesis; L-isoleucine from 2-oxobutanoate: step 3/4. Its pathway is amino-acid biosynthesis; L-valine biosynthesis; L-valine from pyruvate: step 3/4. Its function is as follows. Functions in the biosynthesis of branched-chain amino acids. Catalyzes the dehydration of (2R,3R)-2,3-dihydroxy-3-methylpentanoate (2,3-dihydroxy-3-methylvalerate) into 2-oxo-3-methylpentanoate (2-oxo-3-methylvalerate) and of (2R)-2,3-dihydroxy-3-methylbutanoate (2,3-dihydroxyisovalerate) into 2-oxo-3-methylbutanoate (2-oxoisovalerate), the penultimate precursor to L-isoleucine and L-valine, respectively. This is Dihydroxy-acid dehydratase from Vibrio parahaemolyticus serotype O3:K6 (strain RIMD 2210633).